The following is a 458-amino-acid chain: Glycine--tRNA ligase (458 aa).

Residues R97 and E171 each contribute to the substrate site. ATP-binding positions include 203–205, 213–218, 287–288, and 331–334; these read RNE, FRTREF, EL, and GADR. 218-222 provides a ligand contact to substrate; that stretch reads FEQME. 327–331 provides a ligand contact to substrate; sequence EPSLG.

It belongs to the class-II aminoacyl-tRNA synthetase family. In terms of assembly, homodimer.

Its subcellular location is the cytoplasm. It carries out the reaction tRNA(Gly) + glycine + ATP = glycyl-tRNA(Gly) + AMP + diphosphate. Its function is as follows. Catalyzes the attachment of glycine to tRNA(Gly). In Bacillus thuringiensis subsp. konkukian (strain 97-27), this protein is Glycine--tRNA ligase.